The primary structure comprises 399 residues: Elongation factor Tu (399 aa).

In terms of domain architecture, tr-type G spans 10 to 207; that stretch reads KPHMNVGTIG…AMDTYFPDPV (198 aa). The interval 19 to 26 is G1; that stretch reads GQIDHGKT. 19 to 26 serves as a coordination point for GTP; that stretch reads GQIDHGKT. Position 26 (threonine 26) interacts with Mg(2+). A G2 region spans residues 60–64; that stretch reads GITIN. The G3 stretch occupies residues 81–84; sequence DCPG. GTP contacts are provided by residues 81-85 and 136-139; these read DCPGH and NKVD. The G4 stretch occupies residues 136–139; it reads NKVD. A G5 region spans residues 173–175; that stretch reads SAL.

The protein belongs to the TRAFAC class translation factor GTPase superfamily. Classic translation factor GTPase family. EF-Tu/EF-1A subfamily. In terms of assembly, monomer.

It is found in the cytoplasm. It carries out the reaction GTP + H2O = GDP + phosphate + H(+). Functionally, GTP hydrolase that promotes the GTP-dependent binding of aminoacyl-tRNA to the A-site of ribosomes during protein biosynthesis. In Fervidobacterium islandicum, this protein is Elongation factor Tu.